We begin with the raw amino-acid sequence, 439 residues long: C4-dicarboxylate transport protein 1 (439 aa).

Helical transmembrane passes span 18-38, 56-76, 91-111, 157-177, 193-213, and 231-251; these read VLYI…WLWP, LIKM…IAHV, IYFE…ANVI, GEIL…MSLG, AIFG…FGAM, and LIAT…GIIA.

This sequence belongs to the dicarboxylate/amino acid:cation symporter (DAACS) (TC 2.A.23) family.

Its subcellular location is the cell inner membrane. Responsible for the transport of dicarboxylates such as succinate, fumarate, and malate from the periplasm across the membrane. The protein is C4-dicarboxylate transport protein 1 of Bradyrhizobium sp. (strain ORS 278).